Consider the following 33-residue polypeptide: Brevinin-2DYd (33 aa).

Cysteines 27 and 33 form a disulfide.

In terms of tissue distribution, expressed by the skin glands.

The protein resides in the secreted. Antimicrobial peptide. A mixture of Brevinin-2DYc/2DYd is active against the Gram-positive bacterium S.aureus (MIC=15 uM) and the Gram-negative bacterium E.coli (MIC=15 uM). The protein is Brevinin-2DYd of Rana dybowskii (Dybovsky's frog).